The chain runs to 252 residues: MTLPAARTGVLARKVGMTRIFAADGRHVPVTVLSLDGCQVVGVRSEEERSVTTKKGGQVTRTDGYKAVIMGSGDKKAKNTTKALRGQFAKAGVAPKAKLKEFRVSGDLPEVGSTVQADHFAEGQLVDVSAMSIGKGFAGAMKRWNFSGLRASHGVSISHRAHGSTGMNQDPGRVFKNKKMAGHLGDERVTTQNLVVVRTDVERGLILVKGSVPGHDGTFVEVRDAVKKALPADAPAAGSFKAPEKLSAGGEG.

Glutamine 169 is subject to N5-methylglutamine.

This sequence belongs to the universal ribosomal protein uL3 family. In terms of assembly, part of the 50S ribosomal subunit. Forms a cluster with proteins L14 and L19. In terms of processing, methylated by PrmB.

Functionally, one of the primary rRNA binding proteins, it binds directly near the 3'-end of the 23S rRNA, where it nucleates assembly of the 50S subunit. The polypeptide is Large ribosomal subunit protein uL3 (Hyphomonas neptunium (strain ATCC 15444)).